A 312-amino-acid polypeptide reads, in one-letter code: Mas-related G-protein coupled receptor member E (312 aa).

Residues 1 to 20 are Extracellular-facing; that stretch reads MMEPREAGQHVGAANGAQED. A helical transmembrane segment spans residues 21–41; the sequence is VAFNLIILSLTEGLGLGGLLG. The Cytoplasmic portion of the chain corresponds to 42 to 59; that stretch reads NGAVLWLLSSNVYRNPFA. A helical membrane pass occupies residues 60–80; that stretch reads IYLLDVACADLIFLGCHMVAI. Residues 81 to 106 lie on the Extracellular side of the membrane; that stretch reads VPDLLQGRLDFPGFVQTSLATLRFFC. A helical transmembrane segment spans residues 107 to 127; it reads YIVGLSLLAAVSVEQCLAALF. Topologically, residues 128–141 are cytoplasmic; sequence PAWYSCRRPRHLTT. The chain crosses the membrane as a helical span at residues 142–162; the sequence is CVCALTWALCLLLHLLLSGAC. Topologically, residues 163–176 are extracellular; sequence TQFFGEPSRHLCRT. Residues 177–197 form a helical membrane-spanning segment; that stretch reads LWLVAAVLLALLCCTMCGASL. Residues 198-217 lie on the Cytoplasmic side of the membrane; the sequence is MLLLRVERGPQRPPPRGFPG. Residues 218 to 238 traverse the membrane as a helical segment; that stretch reads LILLTVLLFLFCGLPFGIYWL. At 239 to 241 the chain is on the extracellular side; the sequence is SRN. Residues 242–262 form a helical membrane-spanning segment; that stretch reads LLWYIPHYFYHFSFLMAAVHC. Topologically, residues 263–312 are cytoplasmic; it reads AAKPVVYFCLGSAQGRRLPLRLVLQRALGDEAELGAVRETSRRGLVDIAA.

It belongs to the G-protein coupled receptor 1 family. Mas subfamily.

The protein localises to the cell membrane. Its function is as follows. Orphan receptor. May regulate nociceptor function and/or development, including the sensation or modulation of pain. The sequence is that of Mas-related G-protein coupled receptor member E (MRGPRE) from Homo sapiens (Human).